A 174-amino-acid chain; its full sequence is Chorismate pyruvate-lyase (174 aa).

Residues methionine 36, arginine 78, leucine 116, and glutamate 157 each contribute to the substrate site.

The protein belongs to the UbiC family. As to quaternary structure, monomer.

The protein resides in the cytoplasm. It carries out the reaction chorismate = 4-hydroxybenzoate + pyruvate. The protein operates within cofactor biosynthesis; ubiquinone biosynthesis. In terms of biological role, removes the pyruvyl group from chorismate, with concomitant aromatization of the ring, to provide 4-hydroxybenzoate (4HB) for the ubiquinone pathway. The chain is Chorismate pyruvate-lyase from Erwinia tasmaniensis (strain DSM 17950 / CFBP 7177 / CIP 109463 / NCPPB 4357 / Et1/99).